Reading from the N-terminus, the 504-residue chain is Deoxyguanosinetriphosphate triphosphohydrolase (504 aa).

The region spanning 66–273 (RLTHSMEVQQ…MEAADDISYC (208 aa)) is the HD domain.

The protein belongs to the dGTPase family. Type 1 subfamily. As to quaternary structure, homotetramer. Mg(2+) is required as a cofactor.

The catalysed reaction is dGTP + H2O = 2'-deoxyguanosine + triphosphate + H(+). Its function is as follows. dGTPase preferentially hydrolyzes dGTP over the other canonical NTPs. The sequence is that of Deoxyguanosinetriphosphate triphosphohydrolase from Citrobacter koseri (strain ATCC BAA-895 / CDC 4225-83 / SGSC4696).